The primary structure comprises 166 residues: Heme-degrading monooxygenase HmoB (166 aa).

Asn-33 serves as a coordination point for Fe cation. An ABM domain is found at 66-153; that stretch reads FAVLNNIAVT…SAGIDTTSIF (88 aa). Position 138 (His-138) interacts with heme.

Belongs to the antibiotic biosynthesis monooxygenase family. Homodimer.

It is found in the cytoplasm. It carries out the reaction heme b + 3 reduced [NADPH--hemoprotein reductase] + 3 O2 = biliverdin IXalpha + CO + Fe(2+) + 3 oxidized [NADPH--hemoprotein reductase] + 3 H2O + H(+). Its function is as follows. Catalyzes the oxidative degradation of the heme macrocyclic porphyrin ring in the presence of a suitable electron donor such as ascorbate or NADPH--cytochrome P450 reductase, with subsequent release of free iron. This is Heme-degrading monooxygenase HmoB (hmoB) from Bacillus subtilis (strain 168).